We begin with the raw amino-acid sequence, 462 residues long: Asparagine--tRNA ligase (462 aa).

The protein belongs to the class-II aminoacyl-tRNA synthetase family. In terms of assembly, homodimer.

It localises to the cytoplasm. It catalyses the reaction tRNA(Asn) + L-asparagine + ATP = L-asparaginyl-tRNA(Asn) + AMP + diphosphate + H(+). The polypeptide is Asparagine--tRNA ligase (Thermosynechococcus vestitus (strain NIES-2133 / IAM M-273 / BP-1)).